A 28-amino-acid polypeptide reads, in one-letter code: Small spore coat assembly protein A (28 aa).

Residues 8 to 28 (GFALLVVLFILLIIVGAAYIY) form a helical membrane-spanning segment.

It belongs to the SscA family.

The protein resides in the spore coat. It localises to the membrane. Spore protein involved in the assembly of several components of the spore coat, including CotB, CotG and CotH, and in spore germination. The chain is Small spore coat assembly protein A from Bacillus subtilis (strain 168).